The chain runs to 315 residues: Ribose-phosphate pyrophosphokinase (315 aa).

Residues 37-39 and 96-97 each bind ATP; these read DGE and RQ. Mg(2+) is bound by residues His131 and Asp171. Lys195 is a catalytic residue. Residues Arg197, Asp221, and 225–229 each bind D-ribose 5-phosphate; that span reads DTGGT.

The protein belongs to the ribose-phosphate pyrophosphokinase family. Class I subfamily. Homohexamer. Requires Mg(2+) as cofactor.

It is found in the cytoplasm. The enzyme catalyses D-ribose 5-phosphate + ATP = 5-phospho-alpha-D-ribose 1-diphosphate + AMP + H(+). The protein operates within metabolic intermediate biosynthesis; 5-phospho-alpha-D-ribose 1-diphosphate biosynthesis; 5-phospho-alpha-D-ribose 1-diphosphate from D-ribose 5-phosphate (route I): step 1/1. Functionally, involved in the biosynthesis of the central metabolite phospho-alpha-D-ribosyl-1-pyrophosphate (PRPP) via the transfer of pyrophosphoryl group from ATP to 1-hydroxyl of ribose-5-phosphate (Rib-5-P). The chain is Ribose-phosphate pyrophosphokinase from Haemophilus influenzae (strain ATCC 51907 / DSM 11121 / KW20 / Rd).